A 631-amino-acid chain; its full sequence is Phosphomethylpyrimidine synthase (631 aa).

Residues N239, M268, Y297, H333, 353–355 (SRG), 394–397 (DGLR), and E433 each bind substrate. A Zn(2+)-binding site is contributed by H437. Y460 is a binding site for substrate. H501 lines the Zn(2+) pocket. [4Fe-4S] cluster-binding residues include C581, C584, and C589.

It belongs to the ThiC family. As to quaternary structure, homodimer. It depends on [4Fe-4S] cluster as a cofactor.

It carries out the reaction 5-amino-1-(5-phospho-beta-D-ribosyl)imidazole + S-adenosyl-L-methionine = 4-amino-2-methyl-5-(phosphooxymethyl)pyrimidine + CO + 5'-deoxyadenosine + formate + L-methionine + 3 H(+). It functions in the pathway cofactor biosynthesis; thiamine diphosphate biosynthesis. In terms of biological role, catalyzes the synthesis of the hydroxymethylpyrimidine phosphate (HMP-P) moiety of thiamine from aminoimidazole ribotide (AIR) in a radical S-adenosyl-L-methionine (SAM)-dependent reaction. The sequence is that of Phosphomethylpyrimidine synthase from Escherichia coli O139:H28 (strain E24377A / ETEC).